Here is a 544-residue protein sequence, read N- to C-terminus: uncharacterized protein (544 aa).

The first 34 residues, 1–34, serve as a signal peptide directing secretion; sequence MIARRMLCARPWGPSCVVCALCGALAALVPAVGA. The interval 38–69 is disordered; sequence AVPAPGTPAPPAHTASEAVPPAPEPRAEGEQP.

This sequence belongs to the TP096X family.

This is an uncharacterized protein from Treponema pallidum (strain Nichols).